Consider the following 361-residue polypeptide: Serine/threonine-protein kinase SRK2B (361 aa).

One can recognise a Protein kinase domain in the interval 4–260 (YELVKDIGAG…IGDIKKHPWF (257 aa)). Residues 10–18 (IGAGNFGVA) and K33 each bind ATP. D123 acts as the Proton acceptor in catalysis. The residue at position 154 (S154) is a Phosphoserine. Residues 311 to 361 (AFGWGGGEDAEGKEEDAEEEVEEVEEEEDEEDEYDKTVKQVHASMGEVRVS) form a disordered region. Residues 318-344 (EDAEGKEEDAEEEVEEVEEEEDEEDEY) are compositionally biased toward acidic residues.

Belongs to the protein kinase superfamily. Ser/Thr protein kinase family. In terms of tissue distribution, expressed in seedlings.

The catalysed reaction is L-seryl-[protein] + ATP = O-phospho-L-seryl-[protein] + ADP + H(+). It carries out the reaction L-threonyl-[protein] + ATP = O-phospho-L-threonyl-[protein] + ADP + H(+). The polypeptide is Serine/threonine-protein kinase SRK2B (SRK2B) (Arabidopsis thaliana (Mouse-ear cress)).